The following is a 284-amino-acid chain: Shikimate dehydrogenase (NADP(+)) (284 aa).

Shikimate is bound by residues 20 to 22 (SIS) and S67. K71 functions as the Proton acceptor in the catalytic mechanism. Residues N92 and D107 each coordinate shikimate. NADP(+) contacts are provided by residues 129–133 (GAGGA) and V227. A shikimate-binding site is contributed by Y229. G250 is a binding site for NADP(+).

Belongs to the shikimate dehydrogenase family. Homodimer.

The enzyme catalyses shikimate + NADP(+) = 3-dehydroshikimate + NADPH + H(+). It participates in metabolic intermediate biosynthesis; chorismate biosynthesis; chorismate from D-erythrose 4-phosphate and phosphoenolpyruvate: step 4/7. Involved in the biosynthesis of the chorismate, which leads to the biosynthesis of aromatic amino acids. Catalyzes the reversible NADPH linked reduction of 3-dehydroshikimate (DHSA) to yield shikimate (SA). This is Shikimate dehydrogenase (NADP(+)) from Streptococcus sanguinis (strain SK36).